A 155-amino-acid polypeptide reads, in one-letter code: Putative ATP synthase protein YMF19-like protein (155 aa).

3 consecutive transmembrane segments (helical) span residues 23-43, 89-109, and 117-137; these read FLWL…VLVF, WRAL…LGSF, and VDFG…LFFF.

Belongs to the ATPase protein YMF19 family.

It localises to the mitochondrion membrane. In Marchantia polymorpha (Common liverwort), this protein is Putative ATP synthase protein YMF19-like protein (YMF18).